Here is a 291-residue protein sequence, read N- to C-terminus: Ribonuclease Z (291 aa).

Residues H61, H63, D65, H66, H133, D201, and H257 each coordinate Zn(2+). D65 functions as the Proton acceptor in the catalytic mechanism.

This sequence belongs to the RNase Z family. In terms of assembly, homodimer. It depends on Zn(2+) as a cofactor.

The enzyme catalyses Endonucleolytic cleavage of RNA, removing extra 3' nucleotides from tRNA precursor, generating 3' termini of tRNAs. A 3'-hydroxy group is left at the tRNA terminus and a 5'-phosphoryl group is left at the trailer molecule.. Zinc phosphodiesterase, which displays some tRNA 3'-processing endonuclease activity. Probably involved in tRNA maturation, by removing a 3'-trailer from precursor tRNA. This chain is Ribonuclease Z, found in Saccharolobus islandicus (strain M.16.27) (Sulfolobus islandicus).